We begin with the raw amino-acid sequence, 887 residues long: CWF19-like protein 2 (887 aa).

The disordered stretch occupies residues 1–143 (MEAFSVRFES…DKRTEEECDS (143 aa)). Positions 11–103 (ASSIEERKEQ…KKQKCQKQSE (93 aa)) form a coiled coil. The segment covering 14-72 (IEERKEQTRNARAEVLRQAKHNFEKEQRGEERKRLRDEDTWMLPDVHERIEQFSQEHSE) has biased composition (basic and acidic residues). Ser-71 carries the phosphoserine modification. The span at 73–98 (KKKKKKDKHSKKVKKEKKKKRKKQKC) shows a compositional bias: basic residues. The segment covering 99 to 110 (QKQSESTDSSAS) has biased composition (low complexity). The segment covering 124-143 (SDKEKTWKVKDKRTEEECDS) has biased composition (basic and acidic residues). Positions 164–254 (SSSLKAEKET…RNFEDIVAEK (91 aa)) form a coiled coil. Lys-168 is covalently cross-linked (Glycyl lysine isopeptide (Lys-Gly) (interchain with G-Cter in SUMO2)). Disordered stretches follow at residues 315–370 (LEME…DEDE) and 405–447 (SEES…GRRE). Positions 342–352 (CRRESALRKNQ) are enriched in basic and acidic residues. Phosphoserine is present on residues Ser-354 and Ser-366. Basic and acidic residues predominate over residues 414–430 (RSDRRQENRKPSDKKPL). Positions 433–442 (WSYNANQHST) are enriched in polar residues. The residue at position 478 (Ser-478) is a Phosphoserine. A coiled-coil region spans residues 495–524 (IKAEMMGNMELAEQLKAQLKEANKFKETQM). Lys-597 participates in a covalent cross-link: Glycyl lysine isopeptide (Lys-Gly) (interchain with G-Cter in SUMO2). The residue at position 622 (Ser-622) is a Phosphoserine.

The protein belongs to the CWF19 family.

This Mus musculus (Mouse) protein is CWF19-like protein 2 (Cwf19l2).